Here is a 762-residue protein sequence, read N- to C-terminus: Endonuclease MutS2 (762 aa).

The interval 1 to 22 (MSDAPKRSLNPTLMMNNNNTPP) is disordered. Positions 9 to 20 (LNPTLMMNNNNT) are enriched in low complexity. 333–340 (GVNAGGKT) provides a ligand contact to ATP. In terms of domain architecture, Smr spans 688–762 (LDLRGQRSEE…GGSGVKIVKL (75 aa)).

Belongs to the DNA mismatch repair MutS family. MutS2 subfamily. As to quaternary structure, homodimer. Binds to stalled ribosomes, contacting rRNA.

ATPase activity is stimulated by DNA. Functionally, endonuclease that is involved in the suppression of homologous recombination and may thus have a key role in the control of bacterial genetic diversity. Also involved in repairing oxidative DNA damage. Has ATPase activity. Binds DNA. In terms of biological role, endonuclease that is involved in the suppression of homologous recombination and thus may have a key role in the control of bacterial genetic diversity. Its function is as follows. Acts as a ribosome collision sensor, splitting the ribosome into its 2 subunits. Detects stalled/collided 70S ribosomes which it binds and splits by an ATP-hydrolysis driven conformational change. Acts upstream of the ribosome quality control system (RQC), a ribosome-associated complex that mediates the extraction of incompletely synthesized nascent chains from stalled ribosomes and their subsequent degradation. Probably generates substrates for RQC. The chain is Endonuclease MutS2 from Helicobacter pylori (strain ATCC 700392 / 26695) (Campylobacter pylori).